The primary structure comprises 505 residues: Probable cytosol aminopeptidase (505 aa).

Mn(2+) is bound by residues Lys269 and Asp274. The active site involves Lys281. Residues Asp292, Asp351, and Glu353 each contribute to the Mn(2+) site. Residue Arg355 is part of the active site.

This sequence belongs to the peptidase M17 family. Mn(2+) serves as cofactor.

The protein localises to the cytoplasm. It carries out the reaction Release of an N-terminal amino acid, Xaa-|-Yaa-, in which Xaa is preferably Leu, but may be other amino acids including Pro although not Arg or Lys, and Yaa may be Pro. Amino acid amides and methyl esters are also readily hydrolyzed, but rates on arylamides are exceedingly low.. The enzyme catalyses Release of an N-terminal amino acid, preferentially leucine, but not glutamic or aspartic acids.. In terms of biological role, presumably involved in the processing and regular turnover of intracellular proteins. Catalyzes the removal of unsubstituted N-terminal amino acids from various peptides. This Rhodococcus jostii (strain RHA1) protein is Probable cytosol aminopeptidase.